A 257-amino-acid polypeptide reads, in one-letter code: Aspartate/glutamate leucyltransferase (257 aa).

Belongs to the R-transferase family. Bpt subfamily.

It is found in the cytoplasm. The catalysed reaction is N-terminal L-glutamyl-[protein] + L-leucyl-tRNA(Leu) = N-terminal L-leucyl-L-glutamyl-[protein] + tRNA(Leu) + H(+). It catalyses the reaction N-terminal L-aspartyl-[protein] + L-leucyl-tRNA(Leu) = N-terminal L-leucyl-L-aspartyl-[protein] + tRNA(Leu) + H(+). Functions in the N-end rule pathway of protein degradation where it conjugates Leu from its aminoacyl-tRNA to the N-termini of proteins containing an N-terminal aspartate or glutamate. The sequence is that of Aspartate/glutamate leucyltransferase from Rhodopseudomonas palustris (strain BisB5).